Reading from the N-terminus, the 492-residue chain is Trehalose-6-phosphate synthase (492 aa).

Position 25 (Arg-25) interacts with D-glucose 6-phosphate. Residue 45-46 (GG) coordinates UDP-alpha-D-glucose. Tyr-101 and Asp-155 together coordinate D-glucose 6-phosphate. 2 residues coordinate UDP-alpha-D-glucose: Arg-297 and Lys-302. A D-glucose 6-phosphate-binding site is contributed by Arg-335. 400 to 404 (LVAKE) contributes to the UDP-alpha-D-glucose binding site.

The protein belongs to the glycosyltransferase 20 family. As to quaternary structure, homotetramer.

It carries out the reaction ADP-alpha-D-glucose + D-glucose 6-phosphate = alpha,alpha-trehalose 6-phosphate + ADP + H(+). It catalyses the reaction CDP-alpha-D-glucose + D-glucose 6-phosphate = alpha,alpha-trehalose 6-phosphate + CDP + H(+). The enzyme catalyses GDP-alpha-D-glucose + D-glucose 6-phosphate = alpha,alpha-trehalose 6-phosphate + GDP + H(+). The catalysed reaction is TDP-alpha-D-glucose + D-glucose 6-phosphate = 5-methyl-UDP + alpha,alpha-trehalose 6-phosphate + H(+). It carries out the reaction D-glucose 6-phosphate + UDP-alpha-D-glucose = alpha,alpha-trehalose 6-phosphate + UDP + H(+). It participates in glycan biosynthesis; trehalose biosynthesis. Its function is as follows. Probably involved in the osmoprotection via the biosynthesis of trehalose and in the production of glycogen and alpha-glucan via the TreS-Pep2 branch involved in the biosynthesis of maltose-1-phosphate (M1P). Catalyzes the transfer of glucose from UDP-glucose (UDP-Glc) to D-glucose 6-phosphate (Glc-6-P) to form trehalose-6-phosphate. Probably also able to use ADP-Glc, CDP-Glc, GDP-Glc and TDP-Glc as glucosyl donors. The polypeptide is Trehalose-6-phosphate synthase (Mycobacterium avium (strain 104)).